Consider the following 427-residue polypeptide: V-type proton ATPase subunit C 2 (427 aa).

The tract at residues 298–320 is disordered; the sequence is PLGNPARPAAGQTDRDRESEGEG.

It belongs to the V-ATPase C subunit family. In terms of assembly, V-ATPase is a heteromultimeric enzyme made up of two complexes: the ATP-hydrolytic V1 complex and the proton translocation V0 complex. The V1 complex consists of three catalytic AB heterodimers that form a heterohexamer, three peripheral stalks each consisting of EG heterodimers, one central rotor including subunits D and F, and the regulatory subunits C and H. The proton translocation complex V0 consists of the proton transport subunit a, a ring of proteolipid subunits c9c'', rotary subunit d, subunits e and f, and the accessory subunits ATP6AP1/Ac45 and ATP6AP2/PRR. In terms of tissue distribution, predominantly expressed in the lung and kidney. Isoform 1 is lung-specific while isoform 3 is a kidney-specific isoform. Isoform 1 is localized in the lamellar bodies of type II alveolar cells. Isoform 2 is strongly expressed in the cortical and medulla collecting ducts and is found in the plasma membranes of renal alpha and beta intercalated cells.

Its function is as follows. Subunit of the V1 complex of vacuolar(H+)-ATPase (V-ATPase), a multisubunit enzyme composed of a peripheral complex (V1) that hydrolyzes ATP and a membrane integral complex (V0) that translocates protons. V-ATPase is responsible for acidifying and maintaining the pH of intracellular compartments and in some cell types, is targeted to the plasma membrane, where it is responsible for acidifying the extracellular environment. Subunit C is necessary for the assembly of the catalytic sector of the enzyme and is likely to have a specific function in its catalytic activity. This chain is V-type proton ATPase subunit C 2 (Atp6v1c2), found in Mus musculus (Mouse).